A 348-amino-acid chain; its full sequence is MVRNINETFLKACKGERTDYVPAWYMRQAGRSQPEYRKIKEKYSLFEITHNPELCAYVTKLPVDQYNVDAAILYKDIMSPLPAIGVDVEIKSGIGPVIENPIRSMQDVEKLGEIHPEEDVPYILDTIRLLTAEMLDVPLIGFSGAPFTLASYMIEGGPSRNYHKTKAFMYAEPKAWFALMDKLSDMVIAYLKAQIQAGAKAVQVFDSWVGTVNVADYRIFIKPAMERIFAQVREMNVPMIMHGVGAGHLANEWNDLPLDVVGLDWRLSIEEARTRGIHKAVQGNMDPSLLLAPWNVIEEHVKGILDQGMKQPGYVFNLGHGVFPEVNPDTLKRLTAFIHEYSKEQLAK.

Substrate contacts are provided by residues 27–31 (RQAGR), Phe-46, Asp-76, Tyr-152, Ser-207, and His-320.

Belongs to the uroporphyrinogen decarboxylase family. Homodimer.

It localises to the cytoplasm. The enzyme catalyses uroporphyrinogen III + 4 H(+) = coproporphyrinogen III + 4 CO2. Its pathway is porphyrin-containing compound metabolism; protoporphyrin-IX biosynthesis; coproporphyrinogen-III from 5-aminolevulinate: step 4/4. In terms of biological role, catalyzes the decarboxylation of four acetate groups of uroporphyrinogen-III to yield coproporphyrinogen-III. This chain is Uroporphyrinogen decarboxylase, found in Bacillus cytotoxicus (strain DSM 22905 / CIP 110041 / 391-98 / NVH 391-98).